A 404-amino-acid polypeptide reads, in one-letter code: Ribosomal RNA large subunit methyltransferase F (404 aa).

Composition is skewed to basic residues over residues Met-1 to Arg-10 and Gln-18 to Lys-29. Disordered stretches follow at residues Met-1 to Asn-54, Gly-156 to Lys-177, and Arg-289 to Asn-308. Residues Ala-30–Asn-54 show a composition bias toward basic and acidic residues. Residues Thr-157–Pro-172 show a composition bias toward polar residues.

It belongs to the methyltransferase superfamily. METTL16/RlmF family.

The protein resides in the cytoplasm. It carries out the reaction adenosine(1618) in 23S rRNA + S-adenosyl-L-methionine = N(6)-methyladenosine(1618) in 23S rRNA + S-adenosyl-L-homocysteine + H(+). Its function is as follows. Specifically methylates the adenine in position 1618 of 23S rRNA. The chain is Ribosomal RNA large subunit methyltransferase F from Shewanella sediminis (strain HAW-EB3).